The following is a 513-amino-acid chain: Homeobox and leucine zipper protein Homez (513 aa).

Residues 31–90 (WTQAVQTSELDGNEHLLQAFSYFPYPSLADIALLCLRHGLQMEKVKTWFMAQRLRCGISW) constitute a DNA-binding region (homeobox 1). Glycyl lysine isopeptide (Lys-Gly) (interchain with G-Cter in SUMO2) cross-links involve residues Lys-156, Lys-174, and Lys-176. Disordered stretches follow at residues 200-221 (LSKEQAGGGPDQSCGGGTASWN), 241-287 (SCKE…SFSP), 303-328 (RLRNNSVPSRVGPTEYLSPDMQHQRK), 402-429 (PAISTSSTRSLKEWAKTPPLPAPPPPPD), and 480-513 (LDEEEEEEDEELPEDGEEEEEEEEEEDDDVIIRD). Residues 205–217 (AGGGPDQSCGGGT) are compositionally biased toward gly residues. A compositionally biased stretch (low complexity) spans 248–260 (PSGTPPSSSASSP). A Phosphoserine modification is found at Ser-320. 2 DNA-binding regions (homeobox) span residues 324 to 384 (QHQR…KHGQ) and 418 to 477 (TPPL…AEVV). The Nuclear localization signal signature appears at 327-332 (RKTKRK). Thr-418 carries the post-translational modification Phosphothreonine. Residues 419–429 (PPLPAPPPPPD) are compositionally biased toward pro residues.

In terms of assembly, homodimer or heterodimer (Potential). Interacts with HOXC8.

Its subcellular location is the nucleus. In terms of biological role, may function as a transcriptional regulator. In Rattus norvegicus (Rat), this protein is Homeobox and leucine zipper protein Homez (Homez).